The primary structure comprises 567 residues: Oxygen-dependent choline dehydrogenase (567 aa).

Residue 6-35 (DYIIVGAGSAGNTLATRLTEDEGVTVLLLE) coordinates FAD. Catalysis depends on His475, which acts as the Proton acceptor.

The protein belongs to the GMC oxidoreductase family. FAD is required as a cofactor.

It catalyses the reaction choline + A = betaine aldehyde + AH2. The enzyme catalyses betaine aldehyde + NAD(+) + H2O = glycine betaine + NADH + 2 H(+). It functions in the pathway amine and polyamine biosynthesis; betaine biosynthesis via choline pathway; betaine aldehyde from choline (cytochrome c reductase route): step 1/1. In terms of biological role, involved in the biosynthesis of the osmoprotectant glycine betaine. Catalyzes the oxidation of choline to betaine aldehyde and betaine aldehyde to glycine betaine at the same rate. The polypeptide is Oxygen-dependent choline dehydrogenase (Pseudomonas fluorescens (strain SBW25)).